The primary structure comprises 247 residues: ATP synthase subunit a, chloroplastic (247 aa).

The next 5 helical transmembrane spans lie at 38–58, 95–115, 134–154, 199–219, and 220–240; these read QVLI…IIAV, VPFI…GALL, INTT…AGLT, LVVV…VMFL, and GLFT…AYIG.

The protein belongs to the ATPase A chain family. In terms of assembly, F-type ATPases have 2 components, CF(1) - the catalytic core - and CF(0) - the membrane proton channel. CF(1) has five subunits: alpha(3), beta(3), gamma(1), delta(1), epsilon(1). CF(0) has four main subunits: a, b, b' and c.

Its subcellular location is the plastid. The protein resides in the chloroplast thylakoid membrane. Key component of the proton channel; it plays a direct role in the translocation of protons across the membrane. This Ranunculus macranthus (Large buttercup) protein is ATP synthase subunit a, chloroplastic.